Consider the following 363-residue polypeptide: Cobalt-precorrin-5B C(1)-methyltransferase (363 aa).

It belongs to the CbiD family.

The catalysed reaction is Co-precorrin-5B + S-adenosyl-L-methionine = Co-precorrin-6A + S-adenosyl-L-homocysteine. Its pathway is cofactor biosynthesis; adenosylcobalamin biosynthesis; cob(II)yrinate a,c-diamide from sirohydrochlorin (anaerobic route): step 6/10. Catalyzes the methylation of C-1 in cobalt-precorrin-5B to form cobalt-precorrin-6A. In Burkholderia mallei (strain ATCC 23344), this protein is Cobalt-precorrin-5B C(1)-methyltransferase.